The chain runs to 153 residues: Ribosomal RNA large subunit methyltransferase H (153 aa).

Residues leucine 71 and glycine 102 each coordinate S-adenosyl-L-methionine.

Belongs to the RNA methyltransferase RlmH family. In terms of assembly, homodimer.

It is found in the cytoplasm. It catalyses the reaction pseudouridine(1915) in 23S rRNA + S-adenosyl-L-methionine = N(3)-methylpseudouridine(1915) in 23S rRNA + S-adenosyl-L-homocysteine + H(+). Its function is as follows. Specifically methylates the pseudouridine at position 1915 (m3Psi1915) in 23S rRNA. This Anaeromyxobacter sp. (strain K) protein is Ribosomal RNA large subunit methyltransferase H.